Consider the following 766-residue polypeptide: Exocyst complex component 6 (766 aa).

The stretch at 28 to 90 (NTKQIGDQLE…SLDTSLRQIS (63 aa)) forms a coiled coil.

It belongs to the SEC15 family. In terms of assembly, the exocyst complex is composed of Sec3/Exoc1, Sec5/Exoc2, Sec6/Exoc3, Sec8/Exoc4, Sec10/Exoc5, Sec15/Exoc6, Exo70/Exoc7 and Exo84/Exoc8. Interacts with RAB3, RAB8, RAB11 and RAB27. In terms of tissue distribution, detected in developing rhabdomeres in photoreceptor cells.

It localises to the cell projection. Its subcellular location is the rhabdomere. Its function is as follows. Component of the exocyst complex involved in the docking of exocytic vesicles with fusion sites on the plasma membrane. In Drosophila melanogaster (Fruit fly), this protein is Exocyst complex component 6.